The sequence spans 714 residues: Polyribonucleotide nucleotidyltransferase (714 aa).

The Mg(2+) site is built by D486 and D492. Positions 553 to 612 constitute a KH domain; sequence PRIITMKINPEKIRDVIGKGGAVIRALTEETGTTIDIEEDGTIKIGCTSAEAGEEAKKRI. An S1 motif domain is found at 622–690; sequence GQVYDGTVLK…DKGRVRLSAK (69 aa).

The protein belongs to the polyribonucleotide nucleotidyltransferase family. It depends on Mg(2+) as a cofactor.

It localises to the cytoplasm. It carries out the reaction RNA(n+1) + phosphate = RNA(n) + a ribonucleoside 5'-diphosphate. Functionally, involved in mRNA degradation. Catalyzes the phosphorolysis of single-stranded polyribonucleotides processively in the 3'- to 5'-direction. This is Polyribonucleotide nucleotidyltransferase from Methylobacillus flagellatus (strain ATCC 51484 / DSM 6875 / VKM B-1610 / KT).